The sequence spans 870 residues: Importin subunit beta-1 (870 aa).

An N-acetylalanine modification is found at Ala2. HEAT repeat units follow at residues Glu4–Gln33, Leu35–Leu67, Met87–Gln126, Leu132–Glu161, Val172–Leu204, Asp214–Thr249, Ala255–Gly304, Phe313–Gly361, Val365–Leu395, Leu403–Phe440, Cys456–Gly492, Thr498–Arg535, Ser542–Ile588, Thr596–Ala637, Ala642–Leu679, Leu684–Ile722, Trp730–Phe776, and Ser826–Ile868. One can recognise an Importin N-terminal domain in the interval Ala23–Ala103.

This sequence belongs to the importin beta family. Importin beta-1 subfamily. As to quaternary structure, forms a complex with the importin subunits alpha IMPA1 or IMPA2, the nucleoporin NUP62 and the Ran-GTP-binding proteins RAN1, RAN2 or RAN3. In terms of tissue distribution, expressed in roots, cotyledons, leaves, stems, petals, stamen, stigma, siliques, embryos and guard cells.

Its subcellular location is the cytoplasm. The protein resides in the nucleus. In terms of biological role, acts as a negative effector of drought tolerance. Involved in the regulation of stomatal closure and in the abscisic acid (ABA)-mediated pathway that lead to drought tolerance. Does not directly mediate nuclear import of ABI1 and ABI2 which are key regulators of the ABA signaling pathway. May be involved in nuclear translocation of other type 2C protein phosphatases that mediate ABA signaling. In Arabidopsis thaliana (Mouse-ear cress), this protein is Importin subunit beta-1.